Consider the following 404-residue polypeptide: S-adenosylmethionine synthase (404 aa).

Residue 139 to 144 coordinates ATP; the sequence is GKGSTD.

This sequence belongs to the AdoMet synthase 2 family. It depends on Mg(2+) as a cofactor.

The catalysed reaction is L-methionine + ATP + H2O = S-adenosyl-L-methionine + phosphate + diphosphate. It functions in the pathway amino-acid biosynthesis; S-adenosyl-L-methionine biosynthesis; S-adenosyl-L-methionine from L-methionine: step 1/1. In terms of biological role, catalyzes the formation of S-adenosylmethionine from methionine and ATP. This is S-adenosylmethionine synthase from Saccharolobus islandicus (strain L.S.2.15 / Lassen #1) (Sulfolobus islandicus).